Here is a 473-residue protein sequence, read N- to C-terminus: Reticulon-4 receptor (473 aa).

An N-terminal signal peptide occupies residues 1-26 (MKRASSGGSRLLAWVLWLQAWRVATP). Intrachain disulfides connect Cys27-Cys33 and Cys31-Cys43. The region spanning 27–57 (CPGACVCYNEPKVTTSCPQQGLQAVPTGIPA) is the LRRNT domain. 9 LRR repeats span residues 56-79 (PASSQRIFLHGNRISYVPAASFQS), 80-103 (CRNLTILWLHSNALAGIDAAAFTG), 105-128 (TLLEQLDLSDNAQLRVVDPTTFRG), 129-152 (LGHLHTLHLDRCGLQELGPGLFRG), 153-176 (LAALQYLYLQDNNLQALPDNTFRD), 178-200 (GNLTHLFLHGNRIPSVPEHAFRG), 202-224 (HSLDRLLLHQNHVARVHPHAFRD), 225-248 (LGRLMTLYLFANNLSMLPAEVLVP), and 250-273 (RSLQYLRLNDNPWVCDCRARPLWA). A glycan (N-linked (GlcNAc...) asparagine) is linked at Asn82. The LRRCT domain occupies 260–310 (NPWVCDCRARPLWAWLQKFRGSSSEVPCNLPQRLAGRDLKRLAASDLEGCA). Intrachain disulfides connect Cys264–Cys287, Cys266–Cys335, and Cys309–Cys336. The tract at residues 346–446 (VLEPGRPASA…GSSGTGDAEG (101 aa)) is disordered. Asn372 carries N-linked (GlcNAc...) asparagine glycosylation. Basic residues predominate over residues 413–429 (PRRRPGCSRKNRTRSHC). Positions 434–445 (AGSGSSGTGDAE) are enriched in gly residues. A lipid anchor (GPI-anchor amidated serine) is attached at Ser447. The propeptide at 448–473 (GALPALACSLAPLGLALVLWTVLGPC) is removed in mature form.

Belongs to the Nogo receptor family. Homodimer. Interacts with MAG. Interacts with RTN4 and OMG. Interacts with LINGO1 and NGFR. Interacts with KIAA0319L. Interacts with OLFM1; this inhibits interaction with LINGO1 and NGFR. N-glycosylated. O-glycosylated. Contains terminal sialic acid groups on its glycan chains. In terms of tissue distribution, detected in embryonic cerebellum, in spinal cord motor neurons and in dorsal root ganglia. Detected in adult brain, in neocortex, hippocampus, striatum, thalamus and dorsal root ganglion neurons (at protein level).

It localises to the cell membrane. The protein localises to the membrane raft. The protein resides in the cell projection. Its subcellular location is the dendrite. It is found in the perikaryon. It localises to the axon. Functionally, receptor for RTN4, OMG and MAG. Functions as a receptor for the sialylated gangliosides GT1b and GM1. Besides, functions as a receptor for chondroitin sulfate proteoglycans. Can also bind heparin. Intracellular signaling cascades are triggered via the coreceptor NGFR. Signaling mediates activation of Rho and downstream reorganization of the actin cytoskeleton. Mediates axonal growth inhibition. May play a role in regulating axon regeneration and neuronal plasticity in the adult central nervous system. Plays a role in postnatal brain development. Required for normal axon migration across the brain midline and normal formation of the corpus callosum. Protects motoneurons against apoptosis; protection against apoptosis is probably mediated via interaction with MAG. Acts in conjunction with RTN4 and LINGO1 in regulating neuronal precursor cell motility during cortical development. Like other family members, plays a role in restricting the number dendritic spines and the number of synapses that are formed during brain development. In Rattus norvegicus (Rat), this protein is Reticulon-4 receptor (Rtn4r).